We begin with the raw amino-acid sequence, 636 residues long: DNA-dependent metalloprotease SPRTN (636 aa).

Positions 19–42 (QETPAAGWPDEDCPSSKRRRVDPS) are disordered. Residues 76-183 (RAMFLQFNDK…ASGTNITIYH (108 aa)) enclose the SprT-like domain. His141 provides a ligand contact to Zn(2+). Glu142 is an active-site residue. Positions 145 and 160 each coordinate Zn(2+). Disordered regions lie at residues 238–382 (TYTK…GKQR) and 398–430 (RGAS…PSGK). Over residues 241–268 (KIKEPENYGKTGKSDKQRDKMPATEMPK) the composition is skewed to basic and acidic residues. Over residues 272-281 (PPSSTSSSGS) the composition is skewed to low complexity. The SHP-box signature appears at 290–298 (FSGRGFVLG). Residues 302–311 (QIPTNKQIQS) are compositionally biased toward polar residues. Residues 313–327 (PKAPPEPLHSPPDSP) show a composition bias toward pro residues. Polar residues predominate over residues 341 to 374 (RLSSGTSNIPRKRSVGNTNAFINVNGSPVRISNG). Low complexity predominate over residues 399-416 (GASAVGSSKSSTDASTAD). A PIP-box motif is present at residues 451-458 (ESNISKYF). The tract at residues 473–608 (TFGSPQKSAI…VRDQQANNPP (136 aa)) is disordered. Composition is skewed to polar residues over residues 492–523 (FGSN…SGSS) and 545–554 (SPRTSGTTPS). A Nuclear localization signal motif is present at residues 535–566 (SNFPSPRNIGSPRTSGTTPSGAKKRSWEEHNS). Basic and acidic residues-rich tracts occupy residues 559–570 (RSWEEHNSERVF) and 584–593 (TDKKREEVRS). Residues 612-636 (TVHCPVCHIRLPESTINDHLDSCLL) form a UBZ4-type zinc finger. Zn(2+) contacts are provided by Cys615, Cys618, His630, and Cys634.

The protein belongs to the Spartan family. As to quaternary structure, homodimer. Requires Zn(2+) as cofactor. Post-translationally, autocatalytically cleaved in response to double-stranded DNA-binding: autocatalytic cleavage takes place in trans and leads to inactivation.

It is found in the nucleus. The protein localises to the chromosome. Its activity is regulated as follows. DNA-binding activates the protease activity: single-stranded DNA-binding specifically activates ability to cleave covalent DNA-protein cross-links (DPCs). In contrast, double-stranded DNA-binding specifically activates autocatalytic cleavage, and subsequent inactivation. In terms of biological role, DNA-dependent metalloendopeptidase that mediates the proteolytic cleavage of covalent DNA-protein cross-links (DPCs) during DNA synthesis, thereby playing a key role in maintaining genomic integrity. DPCs are highly toxic DNA lesions that interfere with essential chromatin transactions, such as replication and transcription, and which are induced by reactive agents, such as UV light or formaldehyde. Associates with the DNA replication machinery and specifically removes DPCs during DNA synthesis. Catalyzes proteolytic cleavage of the hmces DNA-protein cross-link following unfolding by the brip1/fancj helicase. Acts as a pleiotropic protease for DNA-binding proteins cross-linked with DNA, such as top1, top2a, histones H3 and H4. Mediates degradation of DPCs that are not ubiquitinated, while it is not able to degrade ubiquitinated DPCs. SPRTN activation requires polymerase collision with DPCs followed by helicase bypass of DPCs. May also act as a 'reader' of ubiquitinated pcna: facilitates chromatin association of rad18 and is required for efficient pcna monoubiquitination, promoting a feed-forward loop to enhance pcna ubiquitination and translesion DNA synthesis. Acts as a regulator of translesion DNA synthesis by recruiting vcp/p97 to sites of DNA damage. This is DNA-dependent metalloprotease SPRTN from Danio rerio (Zebrafish).